Reading from the N-terminus, the 659-residue chain is tRNA 5-methylaminomethyl-2-thiouridine biosynthesis bifunctional protein MnmC (659 aa).

The segment at 1–236 (MKPVMPHAQL…KWEILRGEFL (236 aa)) is tRNA (mnm(5)s(2)U34)-methyltransferase. The FAD-dependent cmnm(5)s(2)U34 oxidoreductase stretch occupies residues 267–659 (IGAGLAGCAT…FALRRLIRGK (393 aa)).

In the N-terminal section; belongs to the methyltransferase superfamily. tRNA (mnm(5)s(2)U34)-methyltransferase family. It in the C-terminal section; belongs to the DAO family. FAD is required as a cofactor.

It localises to the cytoplasm. The catalysed reaction is 5-aminomethyl-2-thiouridine(34) in tRNA + S-adenosyl-L-methionine = 5-methylaminomethyl-2-thiouridine(34) in tRNA + S-adenosyl-L-homocysteine + H(+). Its function is as follows. Catalyzes the last two steps in the biosynthesis of 5-methylaminomethyl-2-thiouridine (mnm(5)s(2)U) at the wobble position (U34) in tRNA. Catalyzes the FAD-dependent demodification of cmnm(5)s(2)U34 to nm(5)s(2)U34, followed by the transfer of a methyl group from S-adenosyl-L-methionine to nm(5)s(2)U34, to form mnm(5)s(2)U34. The sequence is that of tRNA 5-methylaminomethyl-2-thiouridine biosynthesis bifunctional protein MnmC from Pseudomonas fluorescens (strain Pf0-1).